The sequence spans 68 residues: Alpha-conotoxin Lp1.1 (68 aa).

Positions 1–21 (MGMRMMFIMFMLVVLATTVVT) are cleaved as a signal peptide. Residues 22 to 48 (FTSDRALDAMNAAASNKASRLIALAVR) constitute a propeptide that is removed on maturation. Intrachain disulfides connect Cys-50/Cys-56 and Cys-51/Cys-64. Residues 52–54 (ARA) form a lacks the Ser-Xaa-Pro motif that is crucial for potent interaction with nAChR region. Gly-65 is subject to Glycine amide. A propeptide spanning residues 66–68 (GGR) is cleaved from the precursor.

Belongs to the conotoxin A superfamily. Expressed by the venom duct.

The protein localises to the secreted. Alpha-conotoxins act on postsynaptic membranes, they bind to the nicotinic acetylcholine receptors (nAChR) and thus inhibit them. Synthetic peptide inhibits alpha-6/alpha-3/beta-2 and alpha-3/beta-2 nicotinic acetylcholine receptors and causes uncoordinated movement when intramuscularly injected into goldfish. Has a distinct nAChR binding mode from other alpha-conotoxins, due to a different three residue motif (Ala-Xaa-Ala instead of the conserved Ser-Xaa-Pro motif). This chain is Alpha-conotoxin Lp1.1, found in Conus leopardus (Leopard cone).